The primary structure comprises 275 residues: Large ribosomal subunit protein uL2 (275 aa).

Residues 216-275 (GIRPQTRGSAMNPIDHPHGGGEGKTNSGRHPVTPWGMPTKGYKTRKKKASDKLIISKRKK) are disordered. Positions 257–275 (YKTRKKKASDKLIISKRKK) are enriched in basic residues.

It belongs to the universal ribosomal protein uL2 family. In terms of assembly, part of the 50S ribosomal subunit. Forms a bridge to the 30S subunit in the 70S ribosome.

Functionally, one of the primary rRNA binding proteins. Required for association of the 30S and 50S subunits to form the 70S ribosome, for tRNA binding and peptide bond formation. It has been suggested to have peptidyltransferase activity; this is somewhat controversial. Makes several contacts with the 16S rRNA in the 70S ribosome. The sequence is that of Large ribosomal subunit protein uL2 from Aliarcobacter butzleri (strain RM4018) (Arcobacter butzleri).